A 560-amino-acid polypeptide reads, in one-letter code: MLSRLSERCTIATGLEQVLRHYVWSAAWLRDAEPAAAASENIDLSGLMERAGRAAYDVFANLYTSQKHWLILVGSGNNGGDGYVIARHAREAGKIVTVLRMPHSKPLPTEAASAQHAWKAVGGTESTMSPGAPLQLPADVDLIVDGLLGTGICGPPREQYADVIRHINGLPVPRVAIDIPSGLNAETGEAAGACVKADHTATFICLKPGLLTGQAKDYVGQLHYRSLGLEDWMTAPERMRVALCRRVALDDVYEYFGIRRSALAHKGSCGKAILVGGDHGFGGAALMSAEACVTVGAGLTRVLTRPEYAAPLLTRCPEAMVTAVETDTGEQLKQQMLEAFEWASTLAVGPGLGTGAYGQAALTAALRHAELHQDKTLVLDADALNLLAGCLHGREGGAAAGARKHLPVLPNSIITPHPGEAARLLDCRVADVEKDRLAAARRLAAILGGTCLLKGPGTIVHCHSSAKTAIVDAGNAGMASGGMGDVLTGLLAGLAAQRMHDTFDTTCAGALVHGVAADMVAAEDGRGTRGIRATELIHRVPLIVNASGPSPASRQRPSGQ.

Residues 1–241 (MLSRLSERCT…WMTAPERMRV (241 aa)) are NAD(P)H-hydrate epimerase. Residues 29–235 (LRDAEPAAAA…SLGLEDWMTA (207 aa)) form the YjeF N-terminal domain. The segment at 77–81 (NNGGD) is NADPHX 1; for epimerase activity. Asn-78 and Asp-145 together coordinate K(+). The interval 149 to 155 (GTGICGP) is NADPHX 1; for epimerase activity. 2 residues coordinate (6S)-NADPHX: Tyr-160 and Asp-178. K(+) is bound at residue Ser-181. Residues 249 to 547 (LDDVYEYFGI…HRVPLIVNAS (299 aa)) enclose the YjeF C-terminal domain. The interval 249-560 (LDDVYEYFGI…PASRQRPSGQ (312 aa)) is ADP-dependent (S)-NAD(P)H-hydrate dehydratase. (6S)-NADPHX is bound at residue Gly-351. The interval 417-423 (HPGEAAR) is NADPHX 2; for dehydratase activity. ADP is bound by residues 454 to 458 (KGPGT) and 475 to 484 (NAGMASGGMG). Asp-485 is a (6S)-NADPHX binding site.

This sequence in the N-terminal section; belongs to the NnrE/AIBP family. In the C-terminal section; belongs to the NnrD/CARKD family. K(+) is required as a cofactor.

It carries out the reaction (6S)-NADHX + ADP = AMP + phosphate + NADH + H(+). The catalysed reaction is (6S)-NADPHX + ADP = AMP + phosphate + NADPH + H(+). It catalyses the reaction (6R)-NADHX = (6S)-NADHX. The enzyme catalyses (6R)-NADPHX = (6S)-NADPHX. Bifunctional enzyme that catalyzes the epimerization of the S- and R-forms of NAD(P)HX and the dehydration of the S-form of NAD(P)HX at the expense of ADP, which is converted to AMP. This allows the repair of both epimers of NAD(P)HX, a damaged form of NAD(P)H that is a result of enzymatic or heat-dependent hydration. The chain is Bifunctional NAD(P)H-hydrate repair enzyme from Leishmania major.